The chain runs to 232 residues: Ribose-5-phosphate isomerase A (232 aa).

Residues 28 to 31 (TGST), 83 to 86 (DGAD), and 96 to 99 (KGGG) each bind substrate. Glu-105 functions as the Proton acceptor in the catalytic mechanism. A substrate-binding site is contributed by Lys-123.

It belongs to the ribose 5-phosphate isomerase family. As to quaternary structure, homodimer.

It carries out the reaction aldehydo-D-ribose 5-phosphate = D-ribulose 5-phosphate. It participates in carbohydrate degradation; pentose phosphate pathway; D-ribose 5-phosphate from D-ribulose 5-phosphate (non-oxidative stage): step 1/1. Functionally, catalyzes the reversible conversion of ribose-5-phosphate to ribulose 5-phosphate. This chain is Ribose-5-phosphate isomerase A, found in Rhodopseudomonas palustris (strain BisB5).